The primary structure comprises 163 residues: Sperm acrosome membrane-associated protein 3 (163 aa).

Residues 1-35 (MEAGSWAPRRWPRPPGIVLLALASVLSSLLSSGQA) form the signal peptide. The C-type lysozyme domain maps to 36–163 (RVYSRCELAR…LSDWVDGCEL (128 aa)). Disulfide bonds link Cys41-Cys161, Cys65-Cys149, Cys99-Cys114, and Cys110-Cys128.

It belongs to the glycosyl hydrolase 22 family. In terms of assembly, interacts with ASTL.

It localises to the secreted. Its function is as follows. Sperm surface membrane protein that may be involved in sperm-egg plasma membrane adhesion and fusion during fertilization. It could be a potential receptor for the egg oligosaccharide residue N-acetylglucosamine, which is present in the extracellular matrix over the egg plasma membrane. The processed form has no detectable bacteriolytic activity in vitro. In Bos taurus (Bovine), this protein is Sperm acrosome membrane-associated protein 3 (SPACA3).